The chain runs to 254 residues: Triosephosphate isomerase (254 aa).

Position 9–11 (9–11 (NWK)) interacts with substrate. The Electrophile role is filled by histidine 96. Residue glutamate 169 is the Proton acceptor of the active site. Residues glycine 175, serine 215, and 236–237 (GG) each bind substrate.

The protein belongs to the triosephosphate isomerase family. In terms of assembly, homodimer.

It is found in the cytoplasm. The enzyme catalyses D-glyceraldehyde 3-phosphate = dihydroxyacetone phosphate. Its pathway is carbohydrate biosynthesis; gluconeogenesis. The protein operates within carbohydrate degradation; glycolysis; D-glyceraldehyde 3-phosphate from glycerone phosphate: step 1/1. Its function is as follows. Involved in the gluconeogenesis. Catalyzes stereospecifically the conversion of dihydroxyacetone phosphate (DHAP) to D-glyceraldehyde-3-phosphate (G3P). The chain is Triosephosphate isomerase from Borrelia recurrentis (strain A1).